The sequence spans 66 residues: Cysteine proteinase inhibitor (66 aa).

Residues 18–22 (QVVAG) carry the Secondary area of contact motif.

This sequence belongs to the cystatin family. Phytocystatin subfamily. In tubers of untreated plants. After ABA treatment or mechanical wounding is mostly accumulated in leaves, to a lesser extent in stems, but not in roots.

This Solanum tuberosum (Potato) protein is Cysteine proteinase inhibitor (CYS-PIN).